We begin with the raw amino-acid sequence, 386 residues long: Dual-specificity RNA methyltransferase RlmN (386 aa).

E94 serves as the catalytic Proton acceptor. The Radical SAM core domain occupies 100–341 (EENRGTLCIS…VTTIRKTRGD (242 aa)). A disulfide bridge connects residues C107 and C347. [4Fe-4S] cluster is bound by residues C114, C118, and C121. Residues 173–174 (GE), S205, 227–229 (SLH), and N304 contribute to the S-adenosyl-L-methionine site. C347 functions as the S-methylcysteine intermediate in the catalytic mechanism.

Belongs to the radical SAM superfamily. RlmN family. [4Fe-4S] cluster serves as cofactor.

The protein resides in the cytoplasm. It catalyses the reaction adenosine(2503) in 23S rRNA + 2 reduced [2Fe-2S]-[ferredoxin] + 2 S-adenosyl-L-methionine = 2-methyladenosine(2503) in 23S rRNA + 5'-deoxyadenosine + L-methionine + 2 oxidized [2Fe-2S]-[ferredoxin] + S-adenosyl-L-homocysteine. It carries out the reaction adenosine(37) in tRNA + 2 reduced [2Fe-2S]-[ferredoxin] + 2 S-adenosyl-L-methionine = 2-methyladenosine(37) in tRNA + 5'-deoxyadenosine + L-methionine + 2 oxidized [2Fe-2S]-[ferredoxin] + S-adenosyl-L-homocysteine. Its function is as follows. Specifically methylates position 2 of adenine 2503 in 23S rRNA and position 2 of adenine 37 in tRNAs. m2A2503 modification seems to play a crucial role in the proofreading step occurring at the peptidyl transferase center and thus would serve to optimize ribosomal fidelity. This chain is Dual-specificity RNA methyltransferase RlmN, found in Herminiimonas arsenicoxydans.